A 273-amino-acid polypeptide reads, in one-letter code: Putative pyruvate, phosphate dikinase regulatory protein (273 aa).

153–160 provides a ligand contact to ADP; the sequence is GVSRTSKS.

The protein belongs to the pyruvate, phosphate/water dikinase regulatory protein family. PDRP subfamily.

It carries out the reaction N(tele)-phospho-L-histidyl/L-threonyl-[pyruvate, phosphate dikinase] + ADP = N(tele)-phospho-L-histidyl/O-phospho-L-threonyl-[pyruvate, phosphate dikinase] + AMP + H(+). The enzyme catalyses N(tele)-phospho-L-histidyl/O-phospho-L-threonyl-[pyruvate, phosphate dikinase] + phosphate + H(+) = N(tele)-phospho-L-histidyl/L-threonyl-[pyruvate, phosphate dikinase] + diphosphate. Its function is as follows. Bifunctional serine/threonine kinase and phosphorylase involved in the regulation of the pyruvate, phosphate dikinase (PPDK) by catalyzing its phosphorylation/dephosphorylation. In Ehrlichia ruminantium (strain Welgevonden), this protein is Putative pyruvate, phosphate dikinase regulatory protein.